The chain runs to 1159 residues: Ferroxidase HEPHL1 (1159 aa).

The first 23 residues, 1–23 (MFLKQPGGCILLQFLGLLGLVGA), serve as a signal peptide directing secretion. Plastocyanin-like domains are found at residues 24-206 (VTRT…LLVC), 217-365 (MRTD…VGNC), 378-560 (QRRY…LLVC), 570-718 (TQKG…ISSC), 730-906 (MLRT…LITC), and 914-1092 (KGRR…VPSQ). The Extracellular portion of the chain corresponds to 24–1114 (VTRTYYIGIV…KNLRPRGAKA (1091 aa)). Positions 126 and 128 each coordinate Cu cation. Residue Asn160 is glycosylated (N-linked (GlcNAc...) asparagine). Cys180 and Cys206 are joined by a disulfide. Positions 186 and 188 each coordinate Cu cation. N-linked (GlcNAc...) asparagine glycosylation occurs at Asn235. Residues Cys284 and Cys365 are joined by a disulfide bond. His303, Cys346, and His351 together coordinate Cu cation. N-linked (GlcNAc...) asparagine glycosylation occurs at Asn406. Cys534 and Cys560 are joined by a disulfide. Asn588 is a glycosylation site (N-linked (GlcNAc...) asparagine). A disulfide bond links Cys637 and Cys718. His656, Cys699, His704, and Met709 together coordinate Cu cation. N-linked (GlcNAc...) asparagine glycosylation is present at Asn771. Cys880 and Cys906 form a disulfide bridge. A glycan (N-linked (GlcNAc...) asparagine) is linked at Asn934. Residues His1002, His1005, His1007, His1047, Cys1048, His1049, His1053, and Met1058 each contribute to the Cu cation site. A helical membrane pass occupies residues 1115-1135 (ALVILFILGLLLLVATVVLAL). Residues 1136–1159 (RLRSSRRQMAYREVQSCALPTDAL) lie on the Cytoplasmic side of the membrane.

Belongs to the multicopper oxidase family. Cu cation serves as cofactor.

It localises to the membrane. It carries out the reaction 4 Fe(2+) + O2 + 4 H(+) = 4 Fe(3+) + 2 H2O. Its function is as follows. Is a copper-binding glycoprotein with ferroxidase activity. It oxidizes Fe(2+) to Fe(3+) without releasing radical oxygen species. May be involved in the regulation of intracellular iron content. This Mus musculus (Mouse) protein is Ferroxidase HEPHL1 (Hephl1).